Here is a 576-residue protein sequence, read N- to C-terminus: Probable metalloreductase AIM14 (576 aa).

A run of 7 helical transmembrane segments spans residues 21–41 (IKYG…LALL), 70–90 (AIHL…HYSL), 101–118 (LGRL…LTLR), 142–162 (IITV…AIDD), 177–197 (FVGF…IGPM), 204–224 (LFYI…PIHS), and 230–250 (FPFL…RIVF). Residues 101–219 (LGRLSYALIP…NLVNVAFILL (119 aa)) enclose the Ferric oxidoreductase domain. The FAD-binding FR-type domain maps to 250 to 388 (FAKSLMILNK…GGSGISFALP (139 aa)). A compositionally biased stretch (polar residues) spans 480–505 (ISNFNSENADSNDNTPETSHSPTKEN). The tract at residues 480–507 (ISNFNSENADSNDNTPETSHSPTKENGS) is disordered.

It belongs to the ferric reductase (FRE) family. AIM14 subfamily. In terms of assembly, interacts with ribosomes.

Its subcellular location is the membrane. Probable cell surface metalloreductase. May be involved in iron or copper homeostasis. This chain is Probable metalloreductase AIM14 (AIM14), found in Saccharomyces cerevisiae (strain Lalvin EC1118 / Prise de mousse) (Baker's yeast).